We begin with the raw amino-acid sequence, 571 residues long: Endonuclease/exonuclease/phosphatase family domain-containing protein 1 (571 aa).

Positions 1–20 (MGSTLGCHRSIPRDPSDLSH) are disordered. G2 carries N-myristoyl glycine lipidation. A compositionally biased stretch (basic and acidic residues) spans 11–20 (IPRDPSDLSH). Phosphoserine occurs at positions 16, 21, and 25. The HhH domain maps to 38-67 (ERLNINTATEEELMTLPGVTRAVARSIVEY). Residues S106, S110, S162, and S175 each carry the phosphoserine modification. Positions 202–227 (SRPPSTHTNGGLTFTAKPHPSPTSLS) are disordered. The segment covering 204-213 (PPSTHTNGGL) has biased composition (polar residues). T267 is subject to Phosphothreonine. S430 is subject to Phosphoserine. A disordered region spans residues 548-571 (RKEGPRSGNGLTLERSEANIKHER). Basic and acidic residues predominate over residues 561-571 (ERSEANIKHER).

The sequence is that of Endonuclease/exonuclease/phosphatase family domain-containing protein 1 (EEPD1) from Bos taurus (Bovine).